Reading from the N-terminus, the 314-residue chain is Nucleotide-binding protein CE1710 (314 aa).

The segment at 1-29 (MNQTPGSTVPETATPVTSPASSPSAPETT) is disordered. The span at 7-29 (STVPETATPVTSPASSPSAPETT) shows a compositional bias: low complexity. Position 37-44 (37-44 (GMSGAGLS)) interacts with ATP. Residue 88 to 91 (DVRS) coordinates GTP.

The protein belongs to the RapZ-like family.

Its function is as follows. Displays ATPase and GTPase activities. This is Nucleotide-binding protein CE1710 from Corynebacterium efficiens (strain DSM 44549 / YS-314 / AJ 12310 / JCM 11189 / NBRC 100395).